Reading from the N-terminus, the 666-residue chain is E3 ubiquitin-protein ligase MBR2 (666 aa).

Polar residues-rich tracts occupy residues 1 to 14, 23 to 35, 42 to 58, and 73 to 88; these read MQGP…STGI, CSTN…NNIL, FPNN…ASSS, and SSSR…SNGS. Disordered stretches follow at residues 1–58, 73–95, 155–179, 221–329, 400–433, and 457–491; these read MQGP…ASSS, SSSR…RQLL, SLGS…GLGS, SSLS…DGQP, NPST…TPHN, and GASL…RQRR. Residues 221 to 239 are compositionally biased toward low complexity; it reads SSLSLSMPSQNSPNVNNQS. Composition is skewed to polar residues over residues 258–268, 286–303, and 414–433; these read AFPSTRSTETI, FSFT…QLPA, and GSSS…TPHN. The RING-type; atypical zinc finger occupies 619 to 660; that stretch reads CCVCQEEYAEGDDLGTLGCGHEFHTACVKQWLMLKNLCPICK.

This sequence belongs to the RING-type zinc finger family. As to quaternary structure, interacts with MED25 and UBC11.

It catalyses the reaction S-ubiquitinyl-[E2 ubiquitin-conjugating enzyme]-L-cysteine + [acceptor protein]-L-lysine = [E2 ubiquitin-conjugating enzyme]-L-cysteine + N(6)-ubiquitinyl-[acceptor protein]-L-lysine.. The protein operates within protein modification; protein ubiquitination. In terms of biological role, E3 ubiquitin-protein ligase that functions as a regulator of MED25 stability by targeting MED25 for degradation in a RING-H2-dependent way. Proteasome-dependent degradation of MED25 seems to activate its function as positive regulator of FLOWERING LOCUS T (FT) and is important to induce the expression of FT and consequently to promote flowering. May function downstream of HAL3 and be required for HAL3-regulated plant growth. Activation of MBR2 by HAL3 may lead to the degradation of cell cycle suppressors, resulting in enhancement of cell division and plant growth. The chain is E3 ubiquitin-protein ligase MBR2 (MBR2) from Arabidopsis thaliana (Mouse-ear cress).